Reading from the N-terminus, the 261-residue chain is MTHQTHAYHMVNPSPWPLTGALSALLMTSGLAMWFHFNSTLLLAMGLLTNILTMYQWWRDIIRESTFQGHHTSIVQKGLRYGMILFIISEVFFFSGFFWAFYHSSLAPTPELGGCWPPTGIHPLNPLEVPLLNTSVLLASGVSITWAHHSLMEGNRKNMLQGLFITISLGVYFTLLQASEYYEASFTISDGVYGSTFFVATGFHGLHVIIGSTFLIVCFLRQLKFHFTSSHHFGFEAAAWYWHFVDVVWLFLYVSIYWWGS.

Topologically, residues Met1–Pro15 are mitochondrial matrix. Residues Trp16–Trp34 traverse the membrane as a helical segment. Residues Phe35–Thr40 lie on the Mitochondrial intermembrane side of the membrane. The helical transmembrane segment at Leu41–Thr66 threads the bilayer. Topologically, residues Phe67–Thr72 are mitochondrial matrix. The chain crosses the membrane as a helical span at residues Ser73–Ser105. Topologically, residues Leu106 to Glu128 are mitochondrial intermembrane. Residues Val129 to Met152 traverse the membrane as a helical segment. The Mitochondrial matrix segment spans residues Glu153–Asn155. The chain crosses the membrane as a helical span at residues Arg156 to Glu183. Over Ala184 to Asp190 the chain is Mitochondrial intermembrane. The chain crosses the membrane as a helical span at residues Gly191–Leu223. Topologically, residues Lys224–His232 are mitochondrial matrix. A helical transmembrane segment spans residues Phe233 to Ile256. The Mitochondrial intermembrane segment spans residues Tyr257 to Ser261.

Belongs to the cytochrome c oxidase subunit 3 family. Component of the cytochrome c oxidase (complex IV, CIV), a multisubunit enzyme composed of 14 subunits. The complex is composed of a catalytic core of 3 subunits MT-CO1, MT-CO2 and MT-CO3, encoded in the mitochondrial DNA, and 11 supernumerary subunits COX4I, COX5A, COX5B, COX6A, COX6B, COX6C, COX7A, COX7B, COX7C, COX8 and NDUFA4, which are encoded in the nuclear genome. The complex exists as a monomer or a dimer and forms supercomplexes (SCs) in the inner mitochondrial membrane with NADH-ubiquinone oxidoreductase (complex I, CI) and ubiquinol-cytochrome c oxidoreductase (cytochrome b-c1 complex, complex III, CIII), resulting in different assemblies (supercomplex SCI(1)III(2)IV(1) and megacomplex MCI(2)III(2)IV(2)).

It localises to the mitochondrion inner membrane. It carries out the reaction 4 Fe(II)-[cytochrome c] + O2 + 8 H(+)(in) = 4 Fe(III)-[cytochrome c] + 2 H2O + 4 H(+)(out). In terms of biological role, component of the cytochrome c oxidase, the last enzyme in the mitochondrial electron transport chain which drives oxidative phosphorylation. The respiratory chain contains 3 multisubunit complexes succinate dehydrogenase (complex II, CII), ubiquinol-cytochrome c oxidoreductase (cytochrome b-c1 complex, complex III, CIII) and cytochrome c oxidase (complex IV, CIV), that cooperate to transfer electrons derived from NADH and succinate to molecular oxygen, creating an electrochemical gradient over the inner membrane that drives transmembrane transport and the ATP synthase. Cytochrome c oxidase is the component of the respiratory chain that catalyzes the reduction of oxygen to water. Electrons originating from reduced cytochrome c in the intermembrane space (IMS) are transferred via the dinuclear copper A center (CU(A)) of subunit 2 and heme A of subunit 1 to the active site in subunit 1, a binuclear center (BNC) formed by heme A3 and copper B (CU(B)). The BNC reduces molecular oxygen to 2 water molecules using 4 electrons from cytochrome c in the IMS and 4 protons from the mitochondrial matrix. This chain is Cytochrome c oxidase subunit 3 (MT-CO3), found in Equus caballus (Horse).